Here is a 735-residue protein sequence, read N- to C-terminus: Protein PAT1 homolog 2 (735 aa).

Disordered stretches follow at residues 39–93 (TFGL…REVK) and 336–366 (QLHPQHRRILSQRQRPQSSSRKQWESRPDPY). Basic and acidic residues-rich tracts occupy residues 49–59 (EPTKQEEDHKK) and 67–93 (PKIEEPEKPQPIKETKKPEKSPLREVK). A compositionally biased stretch (low complexity) spans 346–356 (SQRQRPQSSSR).

It belongs to the PAT1 family. As to quaternary structure, interacts with ribonucleoprotein complex components. Interacts with cpeb.

The protein resides in the cytoplasm. The protein localises to the nucleus. Functionally, RNA-binding protein that acts as a translational repressor. In Xenopus tropicalis (Western clawed frog), this protein is Protein PAT1 homolog 2 (patl2).